The primary structure comprises 62 residues: Metallothionein-4 (62 aa).

Residues cysteine 6, cysteine 8, cysteine 14, cysteine 16, cysteine 20, cysteine 22, cysteine 25, cysteine 27, cysteine 34, cysteine 35, cysteine 37, cysteine 38, cysteine 42, cysteine 45, cysteine 49, cysteine 51, cysteine 58, cysteine 60, and cysteine 61 each coordinate a divalent metal cation.

The protein belongs to the metallothionein superfamily. Type 1 family.

Functionally, seems to bind zinc and copper. Could play a special role in regulating zinc metabolism during the differentiation of stratified epithelia. This is Metallothionein-4 (MT4) from Homo sapiens (Human).